The sequence spans 348 residues: Spore wall and anchoring disk complex protein EnP1 (348 aa).

An N-terminal signal peptide occupies residues 1-16; sequence MKLLGLLISAFGAINA. Residues N47, N139, and N140 are each glycosylated (N-linked (GlcNAc...) asparagine). The short motif at 193 to 198 is the HBM1 element; that stretch reads PRHGRS. The short motif at 248–256 is the HBM2 element; sequence IRKGKDKKC. Positions 322-327 match the HBM3 motif; that stretch reads LKKIRG.

Its subcellular location is the spore wall. The protein localises to the spore. It is found in the perispore. Its function is as follows. Spore wall protein involved in the adhesion to host cells surface glycoaminoglycans (GAGs). Microsporidian spore adherence is an integral part of activation and host cell infection. This Encephalitozoon intestinalis (Microsporidian parasite) protein is Spore wall and anchoring disk complex protein EnP1 (EnP1).